The primary structure comprises 238 residues: tRNA (guanine-N(7)-)-methyltransferase (238 aa).

4 residues coordinate S-adenosyl-L-methionine: glutamate 71, glutamate 96, aspartate 123, and aspartate 146. The active site involves aspartate 146. Substrate is bound by residues lysine 150, aspartate 182, and 217–220; that span reads TKFE.

Belongs to the class I-like SAM-binding methyltransferase superfamily. TrmB family.

The enzyme catalyses guanosine(46) in tRNA + S-adenosyl-L-methionine = N(7)-methylguanosine(46) in tRNA + S-adenosyl-L-homocysteine. Its pathway is tRNA modification; N(7)-methylguanine-tRNA biosynthesis. In terms of biological role, catalyzes the formation of N(7)-methylguanine at position 46 (m7G46) in tRNA. The polypeptide is tRNA (guanine-N(7)-)-methyltransferase (Methylobacillus flagellatus (strain ATCC 51484 / DSM 6875 / VKM B-1610 / KT)).